A 305-amino-acid polypeptide reads, in one-letter code: Tyrosine recombinase XerD (305 aa).

Residues 2-87 (SQGEAWADAF…AVRQFYRFVL (86 aa)) form the Core-binding (CB) domain. In terms of domain architecture, Tyr recombinase spans 108-295 (PLPKVLERDE…AGEHLAHIVQ (188 aa)). Active-site residues include R149, K173, H247, R250, and H273. Y282 (O-(3'-phospho-DNA)-tyrosine intermediate) is an active-site residue.

The protein belongs to the 'phage' integrase family. XerD subfamily. Forms a cyclic heterotetrameric complex composed of two molecules of XerC and two molecules of XerD.

The protein resides in the cytoplasm. Its function is as follows. Site-specific tyrosine recombinase, which acts by catalyzing the cutting and rejoining of the recombining DNA molecules. The XerC-XerD complex is essential to convert dimers of the bacterial chromosome into monomers to permit their segregation at cell division. It also contributes to the segregational stability of plasmids. This Caulobacter vibrioides (strain ATCC 19089 / CIP 103742 / CB 15) (Caulobacter crescentus) protein is Tyrosine recombinase XerD.